Reading from the N-terminus, the 137-residue chain is MEKKTIVLGVIGSDCHAVGNKILDHAFTNAGFNVVNIGVLSPQEVFIKAAIETKADAILLSSLYGQGEIDCKGLRQKCDEAGLEGILLYVGGNIVVGKQHWPDVEKRFKDMGYDRVYAPGTPPEVGIADLKKDLNIE.

In terms of domain architecture, B12-binding spans 3-137; the sequence is KKTIVLGVIG…ADLKKDLNIE (135 aa). Adenosylcob(III)alamin is bound by residues 13–17, His-16, 61–63, and 93–97; these read SDCHA, SSL, and NIVVG.

The protein belongs to the methylaspartate mutase GlmS subunit family. Heterotetramer composed of 2 epsilon subunits (GlmE) and 2 sigma subunits (GlmS). GlmE exists as a homodimer and GlmS as a monomer. The cofactor is adenosylcob(III)alamin.

It carries out the reaction (2S,3S)-3-methyl-L-aspartate = L-glutamate. The protein operates within amino-acid degradation; L-glutamate degradation via mesaconate pathway; acetate and pyruvate from L-glutamate: step 1/4. With respect to regulation, competitively inhibited by (2S,4S)-4-fluoroglutamate, 2-methyleneglutarate, (2R,3RS)-3-fluoroglutamate and (S)-3-methylitaconate. Functionally, catalyzes the carbon skeleton rearrangement of L-glutamate to L-threo-3-methylaspartate ((2S,3S)-3-methylaspartate). The polypeptide is Glutamate mutase sigma subunit (Clostridium cochlearium).